The chain runs to 126 residues: Fumarate reductase subunit C (126 aa).

The next 3 membrane-spanning stretches (helical) occupy residues 30 to 50 (IFVAWFVLYLMLVLRAVGAGG), 64 to 84 (VVVVLNVVALSFLLLHAVTWF), and 105 to 125 (VLAGHYAAWLVVSVIVAWMVL).

This sequence belongs to the FrdC family. Part of an enzyme complex containing four subunits: a flavoprotein (FrdA), an iron-sulfur protein (FrdB), and two hydrophobic anchor proteins (FrdC and FrdD).

The protein resides in the cell membrane. Functionally, anchors the catalytic components of the fumarate reductase complex to the cell membrane, binds quinones. The protein is Fumarate reductase subunit C of Mycobacterium tuberculosis (strain ATCC 25177 / H37Ra).